We begin with the raw amino-acid sequence, 315 residues long: Porphobilinogen deaminase (315 aa).

S-(dipyrrolylmethanemethyl)cysteine is present on C241.

This sequence belongs to the HMBS family. As to quaternary structure, monomer. Requires dipyrromethane as cofactor.

The catalysed reaction is 4 porphobilinogen + H2O = hydroxymethylbilane + 4 NH4(+). It participates in porphyrin-containing compound metabolism; protoporphyrin-IX biosynthesis; coproporphyrinogen-III from 5-aminolevulinate: step 2/4. Its function is as follows. Tetrapolymerization of the monopyrrole PBG into the hydroxymethylbilane pre-uroporphyrinogen in several discrete steps. This Nitratidesulfovibrio vulgaris (strain ATCC 29579 / DSM 644 / CCUG 34227 / NCIMB 8303 / VKM B-1760 / Hildenborough) (Desulfovibrio vulgaris) protein is Porphobilinogen deaminase.